We begin with the raw amino-acid sequence, 321 residues long: MATH domain and coiled-coil domain-containing protein At3g58410 (321 aa).

An MATH domain is found at 6 to 128; the sequence is GKKFAWVIKN…NGELMIVAEV (123 aa). Residues 255-310 adopt a coiled-coil conformation; that stretch reads KVDWLEKKLDQVRDKKEKERSCLAKLQETEETLLKLKQKCTELDALMDTEKAELSA.

The protein is MATH domain and coiled-coil domain-containing protein At3g58410 of Arabidopsis thaliana (Mouse-ear cress).